A 142-amino-acid chain; its full sequence is Protein archease (142 aa).

Ca(2+) contacts are provided by Asp-12, Asp-141, and Leu-142.

It belongs to the archease family.

Activates the tRNA-splicing ligase complex by facilitating the enzymatic turnover of catalytic subunit RtcB. Acts by promoting the guanylylation of RtcB, a key intermediate step in tRNA ligation. Can also alter the NTP specificity of RtcB such that ATP, dGTP or ITP is used efficiently. The protein is Protein archease of Thermococcus gammatolerans (strain DSM 15229 / JCM 11827 / EJ3).